The following is a 134-amino-acid chain: Rhoptry antigen protein (134 aa).

Disordered stretches follow at residues 21–82 (MGPL…SNLK) and 96–134 (QLDK…ENEL). Over residues 29–38 (KSTSAASTSD) the composition is skewed to polar residues. Residues 39-54 (ELSGSEGPSTESTSTG) show a composition bias toward low complexity. Over residues 57–69 (GEDKTTDNTYKEM) the composition is skewed to basic and acidic residues. The span at 102–113 (PKKKKSKRKKKR) shows a compositional bias: basic residues. A compositionally biased stretch (basic and acidic residues) spans 114-126 (DSSSDRILLEESK).

This Plasmodium falciparum protein is Rhoptry antigen protein.